Consider the following 344-residue polypeptide: Phenylalanine--tRNA ligase alpha subunit (344 aa).

Mg(2+) is bound at residue Glu-255.

It belongs to the class-II aminoacyl-tRNA synthetase family. Phe-tRNA synthetase alpha subunit type 1 subfamily. As to quaternary structure, tetramer of two alpha and two beta subunits. Mg(2+) is required as a cofactor.

The protein resides in the cytoplasm. It catalyses the reaction tRNA(Phe) + L-phenylalanine + ATP = L-phenylalanyl-tRNA(Phe) + AMP + diphosphate + H(+). The polypeptide is Phenylalanine--tRNA ligase alpha subunit (Persephonella marina (strain DSM 14350 / EX-H1)).